The chain runs to 22 residues: Large ribosomal subunit protein bL32 (22 aa).

The interval 1-22 (CVQQNKKSRSARDMXXSXDALE) is disordered. A compositionally biased stretch (low complexity) spans 13–22 (DMXXSXDALE).

This sequence belongs to the bacterial ribosomal protein bL32 family.

This chain is Large ribosomal subunit protein bL32 (rpmF), found in Ectopseudomonas mendocina (Pseudomonas mendocina).